A 404-amino-acid chain; its full sequence is MRFISASSLLLALAPTLNAVPVEVAGSAQGLDVTLSQVGNTRIKAVVKNTGSEDVTFVHLNFFKDAAPVQKVSLFRNGMLPNLNLATTEVQFQGIKQRLITEGLSDDALTTLAPGATIEDEFDIASTSDLSEGGTITINSNGLVPITTDNKVTGYIPFTSNELSIDVDAAEAASVTQAVKILERRTKVTSCSGSRLSALQTALRNTVSLARAAATAAQSGSSSRFQEYFKTTSSSTRSTVAARLNAVANEAASTSSGSTTYYCSDVYGYCSSNVLAYTLPSYNIIANCDLYYSYLPALTSTCHAQDQATTTLHEFTHAPGVYSPGTDDLGYGYSAATALSASQALLNADTYALFANGTYSSLLSFVNPLLTPDNSCQPQLLDARTCNRQFGRSTSCKVYWKAVE.

A signal peptide spans 1–19 (MRFISASSLLLALAPTLNA). Positions 20 to 185 (VPVEVAGSAQ…TQAVKILERR (166 aa)) are excised as a propeptide. 2 disulfide bridges follow: C191-C263 and C270-C288. H313 contributes to the Zn(2+) binding site. E314 is a catalytic residue. The Zn(2+) site is built by H317 and D328.

The protein belongs to the peptidase M35 family. The cofactor is Zn(2+).

The protein resides in the secreted. The catalysed reaction is Preferential cleavage of bonds with hydrophobic residues in P1'. Also 3-Asn-|-Gln-4 and 8-Gly-|-Ser-9 bonds in insulin B chain.. In terms of biological role, secreted metalloproteinase that allows assimilation of proteinaceous substrates. Shows high activities on basic nuclear substrates such as histone and protamine. The sequence is that of Neutral protease 2 homolog AFLA_065450 from Aspergillus flavus (strain ATCC 200026 / FGSC A1120 / IAM 13836 / NRRL 3357 / JCM 12722 / SRRC 167).